The following is a 193-amino-acid chain: dCTP deaminase, dUMP-forming (193 aa).

Residues 101-106 (KSSLGR), D119, 127-129 (TLE), Q148, Y162, and Q174 each bind dCTP. Residue E129 is the Proton donor/acceptor of the active site.

The protein belongs to the dCTP deaminase family. Homotrimer.

The enzyme catalyses dCTP + 2 H2O = dUMP + NH4(+) + diphosphate. It functions in the pathway pyrimidine metabolism; dUMP biosynthesis; dUMP from dCTP: step 1/1. Bifunctional enzyme that catalyzes both the deamination of dCTP to dUTP and the hydrolysis of dUTP to dUMP without releasing the toxic dUTP intermediate. The protein is dCTP deaminase, dUMP-forming of Bifidobacterium adolescentis (strain ATCC 15703 / DSM 20083 / NCTC 11814 / E194a).